The sequence spans 351 residues: NADP-dependent isopropanol dehydrogenase (351 aa).

Zn(2+)-binding residues include cysteine 37, histidine 59, glutamate 60, and aspartate 150. NADP(+)-binding positions include 175 to 178, 198 to 200, tyrosine 218, 265 to 267, and lysine 340; these read IGAV, GSR, and INY.

This sequence belongs to the zinc-containing alcohol dehydrogenase family. In terms of assembly, homotetramer. Requires Zn(2+) as cofactor.

It carries out the reaction propan-2-ol + NADP(+) = acetone + NADPH + H(+). Alcohol dehydrogenase with a preference for medium chain secondary alcohols, such as 2-butanol and isopropanol. Has very low activity with primary alcohols, such as ethanol. Under physiological conditions, the enzyme reduces aldehydes and 2-ketones to produce secondary alcohols. Is active with acetaldehyde and propionaldehyde. This is NADP-dependent isopropanol dehydrogenase (adh) from Clostridium beijerinckii (Clostridium MP).